Here is an 845-residue protein sequence, read N- to C-terminus: Aryl hydrocarbon receptor (845 aa).

Residues 1–10 (MNSSSASITY) constitute a propeptide that is removed on maturation. Polar residues predominate over residues 1–10 (MNSSSASITY). Residues 1-39 (MNSSSASITYASRKRRKPVQKTVKPVPAEGIKSNPSKRH) are disordered. 2 short sequence motifs (nuclear localization signal) span residues 13–16 (RKRR) and 37–42 (KRHRDR). The bHLH domain occupies 27–80 (PAEGIKSNPSKRHRDRLNTELDRLASLLPFPQDVVNKLDKLSVLRLSVSYLRAK). Required for maintaining the overall integrity of the AHR:ARNT heterodimer and its transcriptional activity stretches follow at residues 50 to 82 (LASL…AKSF), 117 to 125 (LLQALNGFV), and 265 to 267 (FAI). The Nuclear export signal motif lies at 64-72 (LDKLSVLRL). The PAS 1 domain maps to 110 to 180 (NLQEGEFLLQ…RQLHWALNPS (71 aa)). Residues 274 to 341 (PSILEIRTKN…CAEYHIRMIK (68 aa)) enclose the PAS 2 domain. The PAC domain occupies 347–385 (LIVFRLLTKDNRWTWVQSNARLVYKNGRPDYIIATQRPL). Residues 820-845 (NNTQPTTHLHPSEARPFSDLTSSGFL) are disordered.

In terms of assembly, homodimer. Heterodimer; efficient DNA binding requires dimerization with another bHLH protein. Interacts with ARNT; the heterodimer ARNT:AHR binds to core DNA sequence 5'-TGCGTG-3' within the dioxin response element (DRE) of target gene promoters and activates their transcription. Binds MYBBP1A. Interacts with coactivators including SRC-1, RIP140 and NOCA7, and with the corepressor SMRT. Interacts with NEDD8 and IVNS1ABP. Interacts with BMAL1. Interacts with HSP90AB1. Interacts with TIPARP; leading to mono-ADP-ribosylation of AHR and subsequent inhibition of AHR. In terms of processing, mono-ADP-ribosylated, leading to inhibit transcription activator activity of AHR.

It localises to the cytoplasm. The protein resides in the nucleus. Ligand-activated transcription factor that enables cells to adapt to changing conditions by sensing compounds from the environment, diet, microbiome and cellular metabolism, and which plays important roles in development, immunity and cancer. Upon ligand binding, translocates into the nucleus, where it heterodimerizes with ARNT and induces transcription by binding to xenobiotic response elements (XRE). Regulates a variety of biological processes, including angiogenesis, hematopoiesis, drug and lipid metabolism, cell motility and immune modulation. Xenobiotics can act as ligands: upon xenobiotic-binding, activates the expression of multiple phase I and II xenobiotic chemical metabolizing enzyme genes (such as the CYP1A1 gene). Mediates biochemical and toxic effects of halogenated aromatic hydrocarbons. Next to xenobiotics, natural ligands derived from plants, microbiota, and endogenous metabolism are potent AHR agonists. Tryptophan (Trp) derivatives constitute an important class of endogenous AHR ligands. Acts as a negative regulator of anti-tumor immunity: indoles and kynurenic acid generated by Trp catabolism act as ligand and activate AHR, thereby promoting AHR-driven cancer cell motility and suppressing adaptive immunity. Regulates the circadian clock by inhibiting the basal and circadian expression of the core circadian component PER1. Inhibits PER1 by repressing the CLOCK-BMAL1 heterodimer mediated transcriptional activation of PER1. The heterodimer ARNT:AHR binds to core DNA sequence 5'-TGCGTG-3' within the dioxin response element (DRE) of target gene promoters and activates their transcription. This is Aryl hydrocarbon receptor (AHR) from Delphinapterus leucas (Beluga whale).